The chain runs to 366 residues: Alanine racemase (366 aa).

The Proton acceptor; specific for D-alanine role is filled by Lys40. Lys40 is modified (N6-(pyridoxal phosphate)lysine). Arg136 is a binding site for substrate. Tyr263 serves as the catalytic Proton acceptor; specific for L-alanine. Met310 serves as a coordination point for substrate.

Belongs to the alanine racemase family. The cofactor is pyridoxal 5'-phosphate.

The catalysed reaction is L-alanine = D-alanine. Its pathway is amino-acid biosynthesis; D-alanine biosynthesis; D-alanine from L-alanine: step 1/1. Its function is as follows. Catalyzes the interconversion of L-alanine and D-alanine. May also act on other amino acids. This Streptococcus pyogenes serotype M2 (strain MGAS10270) protein is Alanine racemase (alr).